Here is a 473-residue protein sequence, read N- to C-terminus: UDP-N-acetylmuramate--L-alanine ligase (473 aa).

112 to 118 (GTHGKTT) provides a ligand contact to ATP.

The protein belongs to the MurCDEF family.

It is found in the cytoplasm. The enzyme catalyses UDP-N-acetyl-alpha-D-muramate + L-alanine + ATP = UDP-N-acetyl-alpha-D-muramoyl-L-alanine + ADP + phosphate + H(+). The protein operates within cell wall biogenesis; peptidoglycan biosynthesis. In terms of biological role, cell wall formation. The sequence is that of UDP-N-acetylmuramate--L-alanine ligase from Nitrosomonas europaea (strain ATCC 19718 / CIP 103999 / KCTC 2705 / NBRC 14298).